The chain runs to 462 residues: Cysteine--tRNA ligase (462 aa).

Residue cysteine 24 participates in Zn(2+) binding. Positions 26 to 36 (PTVYDDAHLGH) match the 'HIGH' region motif. Positions 199, 224, and 228 each coordinate Zn(2+). The 'KMSKS' region signature appears at 256–260 (KMSKS). Lysine 259 is an ATP binding site.

Belongs to the class-I aminoacyl-tRNA synthetase family. In terms of assembly, monomer. The cofactor is Zn(2+).

It is found in the cytoplasm. It catalyses the reaction tRNA(Cys) + L-cysteine + ATP = L-cysteinyl-tRNA(Cys) + AMP + diphosphate. This Campylobacter jejuni subsp. jejuni serotype O:23/36 (strain 81-176) protein is Cysteine--tRNA ligase.